The chain runs to 152 residues: 3-dehydroquinate dehydratase (152 aa).

Y26 serves as the catalytic Proton acceptor. Positions 77, 83, and 90 each coordinate substrate. H103 functions as the Proton donor in the catalytic mechanism. Substrate-binding positions include 104–105 (LS) and R114.

This sequence belongs to the type-II 3-dehydroquinase family. As to quaternary structure, homododecamer.

It carries out the reaction 3-dehydroquinate = 3-dehydroshikimate + H2O. Its pathway is metabolic intermediate biosynthesis; chorismate biosynthesis; chorismate from D-erythrose 4-phosphate and phosphoenolpyruvate: step 3/7. In terms of biological role, catalyzes a trans-dehydration via an enolate intermediate. The chain is 3-dehydroquinate dehydratase (aroQ) from Synechocystis sp. (strain ATCC 27184 / PCC 6803 / Kazusa).